The primary structure comprises 135 residues: Galectin-1 (135 aa).

A2 is modified (N-acetylalanine). A Galectin domain is found at G4 to E135. N6-acetyllysine occurs at positions 13, 19, and 29. S30 is subject to Phosphoserine. A beta-D-galactoside is bound by residues H45 to R49, H53, N62, and W69 to E72. Residue K108 is modified to N6-acetyllysine; alternate. N6-succinyllysine; alternate is present on K108. An N6-acetyllysine modification is found at K128.

As to quaternary structure, binds LGALS3BP. Interacts with CD2, CD3, CD4, CD6, CD7, CD43, ALCAM and CD45. Interacts with laminin. Interacts with SUSD2. Exists in a reversible and active monomer-homodimer equilibrium, the mononomer/dimer state is regulated by lectin concentration. Interacts with cargo receptor TMED10; the interaction mediates the translocation from the cytoplasm into the ERGIC (endoplasmic reticulum-Golgi intermediate compartment) and thereby secretion.

It localises to the cytoplasm. The protein resides in the secreted. Its subcellular location is the extracellular space. The protein localises to the extracellular matrix. Its function is as follows. Lectin that binds beta-galactoside and a wide array of complex carbohydrates. Plays a role in regulating apoptosis, cell proliferation and cell differentiation. Inhibits CD45 protein phosphatase activity and therefore the dephosphorylation of Lyn kinase. Strong inducer of T-cell apoptosis. The chain is Galectin-1 (LGALS1) from Cricetulus griseus (Chinese hamster).